We begin with the raw amino-acid sequence, 236 residues long: Small ribosomal subunit protein uS2 (236 aa).

The protein belongs to the universal ribosomal protein uS2 family.

This chain is Small ribosomal subunit protein uS2, found in Brevibacillus brevis (strain 47 / JCM 6285 / NBRC 100599).